A 107-amino-acid chain; its full sequence is Large ribosomal subunit protein uL24 (107 aa).

The protein belongs to the universal ribosomal protein uL24 family. In terms of assembly, part of the 50S ribosomal subunit.

Its function is as follows. One of two assembly initiator proteins, it binds directly to the 5'-end of the 23S rRNA, where it nucleates assembly of the 50S subunit. In terms of biological role, one of the proteins that surrounds the polypeptide exit tunnel on the outside of the subunit. The polypeptide is Large ribosomal subunit protein uL24 (Nitratidesulfovibrio vulgaris (strain ATCC 29579 / DSM 644 / CCUG 34227 / NCIMB 8303 / VKM B-1760 / Hildenborough) (Desulfovibrio vulgaris)).